The chain runs to 441 residues: ATP-dependent protease ATPase subunit HslU (441 aa).

ATP-binding positions include Ile-18, 60-65, Asp-254, Glu-319, and Arg-391; that span reads GVGKTE.

It belongs to the ClpX chaperone family. HslU subfamily. A double ring-shaped homohexamer of HslV is capped on each side by a ring-shaped HslU homohexamer. The assembly of the HslU/HslV complex is dependent on binding of ATP.

Its subcellular location is the cytoplasm. ATPase subunit of a proteasome-like degradation complex; this subunit has chaperone activity. The binding of ATP and its subsequent hydrolysis by HslU are essential for unfolding of protein substrates subsequently hydrolyzed by HslV. HslU recognizes the N-terminal part of its protein substrates and unfolds these before they are guided to HslV for hydrolysis. This Shewanella loihica (strain ATCC BAA-1088 / PV-4) protein is ATP-dependent protease ATPase subunit HslU.